The chain runs to 1135 residues: Topless-related protein 4 (1135 aa).

In terms of domain architecture, LisH spans Leu4–Phe36. In terms of domain architecture, CTLH spans Phe34–Lys92. Ser214 carries the post-translational modification Phosphoserine. Residues Leu281–Ser303 form a disordered region. Positions Pro290–Ser303 are enriched in polar residues. 12 WD repeats span residues Ser355 to Ser395, Glu417 to Asn456, Ala462 to Thr503, Gly506 to Asp547, Ala550 to Thr593, Leu597 to Ser636, Ala638 to His680, Leu776 to Leu815, Asn843 to Thr881, Ala884 to Lys924, Gly927 to Ser966, and Glu1020 to Arg1059. Residues Asp1095 to Arg1135 form a disordered region. Low complexity predominate over residues Gly1119–Arg1135.

As to quaternary structure, tetramer. Interacts with WUS (via the C-terminal domain). Interacts with SPL (via EAR motif). Interacts with SPEAR3/TIE1. Binds to and corepresses GAF1/IDD2 at the promoter of GA20OX2 gene.

It is found in the nucleus. Functionally, transcription corepressor of Zinc finger transcription factors GAF1/IDD2 and ENY/IDD1 in regulation of gibberellin homeostasis and signaling. The polypeptide is Topless-related protein 4 (TPR4) (Arabidopsis thaliana (Mouse-ear cress)).